We begin with the raw amino-acid sequence, 374 residues long: Quinolinate synthase (374 aa).

2 residues coordinate iminosuccinate: His53 and Ser70. A [4Fe-4S] cluster-binding site is contributed by Cys116. Residues 148 to 150 (YMN) and Ser169 contribute to the iminosuccinate site. A [4Fe-4S] cluster-binding site is contributed by Cys236. Residues 262–264 (HPE) and Thr279 each bind iminosuccinate. Cys327 is a binding site for [4Fe-4S] cluster.

This sequence belongs to the quinolinate synthase family. Type 3 subfamily. It depends on [4Fe-4S] cluster as a cofactor.

Its subcellular location is the cytoplasm. It carries out the reaction iminosuccinate + dihydroxyacetone phosphate = quinolinate + phosphate + 2 H2O + H(+). Its pathway is cofactor biosynthesis; NAD(+) biosynthesis; quinolinate from iminoaspartate: step 1/1. Its function is as follows. Catalyzes the condensation of iminoaspartate with dihydroxyacetone phosphate to form quinolinate. The polypeptide is Quinolinate synthase (Haloarcula marismortui (strain ATCC 43049 / DSM 3752 / JCM 8966 / VKM B-1809) (Halobacterium marismortui)).